We begin with the raw amino-acid sequence, 94 residues long: UPF0358 protein Bcer98_2651 (94 aa).

The protein belongs to the UPF0358 family.

The sequence is that of UPF0358 protein Bcer98_2651 from Bacillus cytotoxicus (strain DSM 22905 / CIP 110041 / 391-98 / NVH 391-98).